The primary structure comprises 355 residues: Peptide chain release factor 1 (355 aa).

The residue at position 229 (Gln229) is an N5-methylglutamine. Positions 280-299 (LDRERSAARKGQVGSGDRSE) are disordered.

This sequence belongs to the prokaryotic/mitochondrial release factor family. Post-translationally, methylated by PrmC. Methylation increases the termination efficiency of RF1.

The protein localises to the cytoplasm. In terms of biological role, peptide chain release factor 1 directs the termination of translation in response to the peptide chain termination codons UAG and UAA. This is Peptide chain release factor 1 from Parvibaculum lavamentivorans (strain DS-1 / DSM 13023 / NCIMB 13966).